A 171-amino-acid chain; its full sequence is uncharacterized protein (171 aa).

2 disordered regions span residues 1 to 41 and 114 to 147; these read MDAV…SKPK and DSLGNTASSSSMDPAKGVPSQSGPPEGLGLRPKR. Residues 27-38 are compositionally biased toward low complexity; it reads AQQQQGPSAQGS. Over residues 116–125 the composition is skewed to polar residues; sequence LGNTASSSSM.

This is an uncharacterized protein from Mus musculus (Mouse).